The following is a 187-amino-acid chain: uncharacterized protein (187 aa).

Positions Lys127–Leu172 form a coiled coil.

This is an uncharacterized protein from Tomato torrado virus (isolate Solanum lycopersicum/Spain/PRIToTV0301/-) (ToTV).